Reading from the N-terminus, the 486-residue chain is Wax ester synthase/diacylglycerol acyltransferase 11 (486 aa).

The Cytoplasmic segment spans residues 1-192; the sequence is MGEDKKTARE…CNSGFFNKIW (192 aa). The active-site Proton acceptor is the histidine 144. The chain crosses the membrane as a helical span at residues 193–213; the sequence is WLFVGLWFILRLLFNTFVDIL. At 214-486 the chain is on the extracellular side; it reads MFALTIFVLR…LERGLYEIEV (273 aa).

The protein in the N-terminal section; belongs to the long-chain O-acyltransferase family. As to expression, mostly expressed in inflorescences and flowers, especially at the periphery of petal epidermal cells.

It is found in the cell membrane. The protein localises to the endoplasmic reticulum membrane. It catalyses the reaction an acyl-CoA + a 1,2-diacyl-sn-glycerol = a triacyl-sn-glycerol + CoA. The enzyme catalyses a long chain fatty alcohol + a fatty acyl-CoA = a wax ester + CoA. The protein operates within glycerolipid metabolism; triacylglycerol biosynthesis. It functions in the pathway lipid metabolism. In terms of biological role, bifunctional wax ester synthase/diacylglycerol acyltransferase. Involved in cuticular wax biosynthesis. Required for petals development, probably by mediating the production of fatty acids at the plasma membrane in the petal epidermis acting as lubricants that makes petal elongation smooth in narrow space between the sepals and the anthers inside floral buds. In Arabidopsis thaliana (Mouse-ear cress), this protein is Wax ester synthase/diacylglycerol acyltransferase 11.